Consider the following 1444-residue polypeptide: DNA polymerase III PolC-type (1444 aa).

One can recognise an Exonuclease domain in the interval 428 to 584 (YCVFDVETTG…FDAEATAYLA (157 aa)).

The protein belongs to the DNA polymerase type-C family. PolC subfamily.

The protein resides in the cytoplasm. It catalyses the reaction DNA(n) + a 2'-deoxyribonucleoside 5'-triphosphate = DNA(n+1) + diphosphate. Functionally, required for replicative DNA synthesis. This DNA polymerase also exhibits 3' to 5' exonuclease activity. The chain is DNA polymerase III PolC-type from Listeria innocua serovar 6a (strain ATCC BAA-680 / CLIP 11262).